Reading from the N-terminus, the 138-residue chain is Phosphoribosyl-AMP cyclohydrolase (138 aa).

Residue Asp-92 participates in Mg(2+) binding. Cys-93 contacts Zn(2+). Residues Asp-94 and Asp-96 each coordinate Mg(2+). Zn(2+)-binding residues include Cys-109 and Cys-116.

The protein belongs to the PRA-CH family. In terms of assembly, homodimer. It depends on Mg(2+) as a cofactor. Zn(2+) is required as a cofactor.

Its subcellular location is the cytoplasm. It carries out the reaction 1-(5-phospho-beta-D-ribosyl)-5'-AMP + H2O = 1-(5-phospho-beta-D-ribosyl)-5-[(5-phospho-beta-D-ribosylamino)methylideneamino]imidazole-4-carboxamide. The protein operates within amino-acid biosynthesis; L-histidine biosynthesis; L-histidine from 5-phospho-alpha-D-ribose 1-diphosphate: step 3/9. In terms of biological role, catalyzes the hydrolysis of the adenine ring of phosphoribosyl-AMP. In Clavibacter sepedonicus (Clavibacter michiganensis subsp. sepedonicus), this protein is Phosphoribosyl-AMP cyclohydrolase.